We begin with the raw amino-acid sequence, 157 residues long: Large ribosomal subunit protein eL21 (157 aa).

A disordered region spans residues 110–132 (QANDQAKAEGNKAGKRVSTKRNP).

It belongs to the eukaryotic ribosomal protein eL21 family.

This Tetrahymena thermophila (strain SB210) protein is Large ribosomal subunit protein eL21 (RPL21).